The following is a 128-amino-acid chain: RxLR effector protein SFI2 (128 aa).

A signal peptide spans 1–22 (MRSAFYIFLVVAVLARCSVVAA). A RxLR-dEER motif is present at residues 52 to 71 (RLLRVAGREDDDATTDEEDR).

It belongs to the RxLR effector family.

Its subcellular location is the secreted. The protein resides in the host nucleus. Functionally, effector that suppresses flg22-induced post-translational MAP kinase activation both tomato and Arabidopsis. The perception of highly conserved pathogen- or microbe-associated molecular patterns (PAMPs/MAMPs), such as flg22, triggers converging signaling pathways recruiting MAP kinase cascades and inducing transcriptional re-programming, yielding a generic antimicrobial response. The chain is RxLR effector protein SFI2 from Phytophthora infestans (strain T30-4) (Potato late blight agent).